We begin with the raw amino-acid sequence, 137 residues long: Flagellar basal body rod protein FlgB (137 aa).

It belongs to the flagella basal body rod proteins family. As to quaternary structure, the basal body constitutes a major portion of the flagellar organelle and consists of a number of rings mounted on a central rod. In Gram-negative bacteria, at least four rings, L, P, S and M are present, whereas Gram-positive bacteria lack the L and P rings. The rod consists of about 26 subunits of FlgG in the distal portion, and FlgB, FlgC and FlgF build up the proximal portion of the rod with about 6 subunits each. Rod assembly occurs by export via the flagellum-specific pathway of its constituent proteins and by their incorporation into the rod structure in the probable order of FlgB, FlgC, FlgF and FlgG. Another protein, FliE, also assembles onto the stable rod structure.

It is found in the bacterial flagellum basal body. Its function is as follows. Structural component of flagellum, the bacterial motility apparatus. Part of the rod structure of flagellar basal body. The protein is Flagellar basal body rod protein FlgB of Proteus mirabilis (strain HI4320).